Consider the following 60-residue polypeptide: MAVPARRTSKAKKNKRRTHYKVTAPSVNFDETTGDYSRSHRVSLKGYYKGRKIAKAASAE.

This sequence belongs to the bacterial ribosomal protein bL32 family.

This Streptococcus pneumoniae serotype 19F (strain G54) protein is Large ribosomal subunit protein bL32.